The chain runs to 314 residues: Methionyl-tRNA formyltransferase (314 aa).

110–113 (SLLP) serves as a coordination point for (6S)-5,6,7,8-tetrahydrofolate.

The protein belongs to the Fmt family.

The catalysed reaction is L-methionyl-tRNA(fMet) + (6R)-10-formyltetrahydrofolate = N-formyl-L-methionyl-tRNA(fMet) + (6S)-5,6,7,8-tetrahydrofolate + H(+). In terms of biological role, attaches a formyl group to the free amino group of methionyl-tRNA(fMet). The formyl group appears to play a dual role in the initiator identity of N-formylmethionyl-tRNA by promoting its recognition by IF2 and preventing the misappropriation of this tRNA by the elongation apparatus. The protein is Methionyl-tRNA formyltransferase of Lactobacillus johnsonii (strain CNCM I-12250 / La1 / NCC 533).